The sequence spans 196 residues: Pyroglutamyl-peptidase 1-like protein (196 aa).

Active-site residues include Glu-65, Cys-127, and His-146.

Belongs to the peptidase C15 family.

In Homo sapiens (Human), this protein is Pyroglutamyl-peptidase 1-like protein (PGPEP1L).